Consider the following 293-residue polypeptide: DNA repair protein RecO (293 aa).

The protein belongs to the RecO family.

Functionally, involved in DNA repair and RecF pathway recombination. The protein is DNA repair protein RecO of Cyanothece sp. (strain PCC 7425 / ATCC 29141).